The following is a 285-amino-acid chain: Polyamine aminopropyltransferase (285 aa).

Residues 2–237 form the PABS domain; the sequence is EFWFSELHSP…GYWLFGFASK (236 aa). An S-methyl-5'-thioadenosine-binding site is contributed by Gln31. Asp86 lines the spermidine pocket. Residues Glu106 and 137 to 138 contribute to the S-methyl-5'-thioadenosine site; that span reads DA. Residue Asp155 is the Proton acceptor of the active site.

It belongs to the spermidine/spermine synthase family. In terms of assembly, homodimer or homotetramer.

Its subcellular location is the cytoplasm. The catalysed reaction is S-adenosyl 3-(methylsulfanyl)propylamine + putrescine = S-methyl-5'-thioadenosine + spermidine + H(+). The protein operates within amine and polyamine biosynthesis; spermidine biosynthesis; spermidine from putrescine: step 1/1. Its function is as follows. Catalyzes the irreversible transfer of a propylamine group from the amino donor S-adenosylmethioninamine (decarboxy-AdoMet) to putrescine (1,4-diaminobutane) to yield spermidine. This chain is Polyamine aminopropyltransferase, found in Lachnospira eligens (strain ATCC 27750 / DSM 3376 / VPI C15-48 / C15-B4) (Eubacterium eligens).